We begin with the raw amino-acid sequence, 410 residues long: LL-diaminopimelate aminotransferase (410 aa).

Residues Tyr-15 and Gly-42 each contribute to the substrate site. Residues Tyr-72, Ser-108–Lys-109, Tyr-132, Asn-187, Tyr-218, and Ser-246–Ser-248 contribute to the pyridoxal 5'-phosphate site. Positions 109, 132, and 187 each coordinate substrate. Residue Lys-249 is modified to N6-(pyridoxal phosphate)lysine. Arg-257 and Asn-292 together coordinate pyridoxal 5'-phosphate. Substrate-binding residues include Asn-292 and Arg-388.

It belongs to the class-I pyridoxal-phosphate-dependent aminotransferase family. LL-diaminopimelate aminotransferase subfamily. In terms of assembly, homodimer. Requires pyridoxal 5'-phosphate as cofactor.

The enzyme catalyses (2S,6S)-2,6-diaminopimelate + 2-oxoglutarate = (S)-2,3,4,5-tetrahydrodipicolinate + L-glutamate + H2O + H(+). Its pathway is amino-acid biosynthesis; L-lysine biosynthesis via DAP pathway; LL-2,6-diaminopimelate from (S)-tetrahydrodipicolinate (aminotransferase route): step 1/1. Involved in the synthesis of meso-diaminopimelate (m-DAP or DL-DAP), required for both lysine and peptidoglycan biosynthesis. Catalyzes the direct conversion of tetrahydrodipicolinate to LL-diaminopimelate. In Syntrophotalea carbinolica (strain DSM 2380 / NBRC 103641 / GraBd1) (Pelobacter carbinolicus), this protein is LL-diaminopimelate aminotransferase.